The primary structure comprises 823 residues: Molybdenum cofactor sulfurase (823 aa).

Lysine 228 is subject to N6-(pyridoxal phosphate)lysine. The active site involves cysteine 392. Residues 628–667 (SSTRLAEPRRGLGSRKSPLRPAMPGAFPQDTPTPEAERNP) are disordered. In terms of domain architecture, MOSC spans 644-819 (SPLRPAMPGA…VMVGDVVTPS (176 aa)).

It belongs to the class-V pyridoxal-phosphate-dependent aminotransferase family. MOCOS subfamily. Requires pyridoxal 5'-phosphate as cofactor.

The enzyme catalyses Mo-molybdopterin + L-cysteine + AH2 = thio-Mo-molybdopterin + L-alanine + A + H2O. It participates in cofactor biosynthesis; molybdopterin biosynthesis. Sulfurates the molybdenum cofactor. Sulfation of molybdenum is essential for xanthine dehydrogenase (XDH) and aldehyde oxidase (ADO) enzymes in which molybdenum cofactor is liganded by 1 oxygen and 1 sulfur atom in active form. This Aspergillus niger (strain ATCC MYA-4892 / CBS 513.88 / FGSC A1513) protein is Molybdenum cofactor sulfurase.